Reading from the N-terminus, the 371-residue chain is Queuine tRNA-ribosyltransferase (371 aa).

Catalysis depends on aspartate 90, which acts as the Proton acceptor. Substrate contacts are provided by residues 90–94 (DSGGF), aspartate 144, glutamine 188, and glycine 215. The RNA binding stretch occupies residues 246–252 (GVGTPED). Catalysis depends on aspartate 265, which acts as the Nucleophile. The tract at residues 270-274 (TRNAR) is RNA binding; important for wobble base 34 recognition. Residues cysteine 303, cysteine 305, cysteine 308, and histidine 334 each contribute to the Zn(2+) site.

It belongs to the queuine tRNA-ribosyltransferase family. In terms of assembly, homodimer. Within each dimer, one monomer is responsible for RNA recognition and catalysis, while the other monomer binds to the replacement base PreQ1. Zn(2+) serves as cofactor.

The catalysed reaction is 7-aminomethyl-7-carbaguanine + guanosine(34) in tRNA = 7-aminomethyl-7-carbaguanosine(34) in tRNA + guanine. It functions in the pathway tRNA modification; tRNA-queuosine biosynthesis. In terms of biological role, catalyzes the base-exchange of a guanine (G) residue with the queuine precursor 7-aminomethyl-7-deazaguanine (PreQ1) at position 34 (anticodon wobble position) in tRNAs with GU(N) anticodons (tRNA-Asp, -Asn, -His and -Tyr). Catalysis occurs through a double-displacement mechanism. The nucleophile active site attacks the C1' of nucleotide 34 to detach the guanine base from the RNA, forming a covalent enzyme-RNA intermediate. The proton acceptor active site deprotonates the incoming PreQ1, allowing a nucleophilic attack on the C1' of the ribose to form the product. After dissociation, two additional enzymatic reactions on the tRNA convert PreQ1 to queuine (Q), resulting in the hypermodified nucleoside queuosine (7-(((4,5-cis-dihydroxy-2-cyclopenten-1-yl)amino)methyl)-7-deazaguanosine). The chain is Queuine tRNA-ribosyltransferase from Neisseria meningitidis serogroup A / serotype 4A (strain DSM 15465 / Z2491).